Here is a 331-residue protein sequence, read N- to C-terminus: Ketol-acid reductoisomerase (NADP(+)) (331 aa).

Residues 4-183 (ATIYYDDDAE…GCTRAGVVET (180 aa)) enclose the KARI N-terminal Rossmann domain. NADP(+) is bound by residues 27-30 (YGSQ), Arg50, Ser53, Ser55, and 85-88 (DTVQ). His109 is a catalytic residue. Gly135 serves as a coordination point for NADP(+). The KARI C-terminal knotted domain occupies 184-329 (TFREETETDL…EDLRALFAWG (146 aa)). Asp192, Glu196, Glu228, and Glu232 together coordinate Mg(2+). Ser253 lines the substrate pocket.

Belongs to the ketol-acid reductoisomerase family. Requires Mg(2+) as cofactor.

The catalysed reaction is (2R)-2,3-dihydroxy-3-methylbutanoate + NADP(+) = (2S)-2-acetolactate + NADPH + H(+). It carries out the reaction (2R,3R)-2,3-dihydroxy-3-methylpentanoate + NADP(+) = (S)-2-ethyl-2-hydroxy-3-oxobutanoate + NADPH + H(+). The protein operates within amino-acid biosynthesis; L-isoleucine biosynthesis; L-isoleucine from 2-oxobutanoate: step 2/4. Its pathway is amino-acid biosynthesis; L-valine biosynthesis; L-valine from pyruvate: step 2/4. Functionally, involved in the biosynthesis of branched-chain amino acids (BCAA). Catalyzes an alkyl-migration followed by a ketol-acid reduction of (S)-2-acetolactate (S2AL) to yield (R)-2,3-dihydroxy-isovalerate. In the isomerase reaction, S2AL is rearranged via a Mg-dependent methyl migration to produce 3-hydroxy-3-methyl-2-ketobutyrate (HMKB). In the reductase reaction, this 2-ketoacid undergoes a metal-dependent reduction by NADPH to yield (R)-2,3-dihydroxy-isovalerate. The chain is Ketol-acid reductoisomerase (NADP(+)) from Natronomonas pharaonis (strain ATCC 35678 / DSM 2160 / CIP 103997 / JCM 8858 / NBRC 14720 / NCIMB 2260 / Gabara) (Halobacterium pharaonis).